A 141-amino-acid polypeptide reads, in one-letter code: Large ribosomal subunit protein uL11 (141 aa).

The protein belongs to the universal ribosomal protein uL11 family. As to quaternary structure, part of the ribosomal stalk of the 50S ribosomal subunit. Interacts with L10 and the large rRNA to form the base of the stalk. L10 forms an elongated spine to which L12 dimers bind in a sequential fashion forming a multimeric L10(L12)X complex. In terms of processing, one or more lysine residues are methylated.

In terms of biological role, forms part of the ribosomal stalk which helps the ribosome interact with GTP-bound translation factors. In Nautilia profundicola (strain ATCC BAA-1463 / DSM 18972 / AmH), this protein is Large ribosomal subunit protein uL11.